An 88-amino-acid polypeptide reads, in one-letter code: Large ribosomal subunit protein bL27 (88 aa).

Residues 1-21 (MAHKKGTGSTRNGRDSRAQRL) form a disordered region.

The protein belongs to the bacterial ribosomal protein bL27 family.

The chain is Large ribosomal subunit protein bL27 from Picosynechococcus sp. (strain ATCC 27264 / PCC 7002 / PR-6) (Agmenellum quadruplicatum).